The chain runs to 244 residues: 1-(5-phosphoribosyl)-5-[(5-phosphoribosylamino)methylideneamino] imidazole-4-carboxamide isomerase (244 aa).

The Proton acceptor role is filled by D8. D130 acts as the Proton donor in catalysis.

Belongs to the HisA/HisF family.

It localises to the cytoplasm. The enzyme catalyses 1-(5-phospho-beta-D-ribosyl)-5-[(5-phospho-beta-D-ribosylamino)methylideneamino]imidazole-4-carboxamide = 5-[(5-phospho-1-deoxy-D-ribulos-1-ylimino)methylamino]-1-(5-phospho-beta-D-ribosyl)imidazole-4-carboxamide. It functions in the pathway amino-acid biosynthesis; L-histidine biosynthesis; L-histidine from 5-phospho-alpha-D-ribose 1-diphosphate: step 4/9. The sequence is that of 1-(5-phosphoribosyl)-5-[(5-phosphoribosylamino)methylideneamino] imidazole-4-carboxamide isomerase from Syntrophomonas wolfei subsp. wolfei (strain DSM 2245B / Goettingen).